A 710-amino-acid polypeptide reads, in one-letter code: Dual specificity protein kinase shkE (710 aa).

Composition is skewed to low complexity over residues 83 to 94, 107 to 129, and 197 to 208; these read DVSDSNNNNSTS, NNNNNNNNNNNNNNNNNNNNNNN, and QKQQQSQASIQQ. Disordered stretches follow at residues 83–136 and 189–232; these read DVSD…PTVI and QHLT…IPPE. In terms of domain architecture, Protein kinase spans 237–495; the sequence is DVKTDLLGGG…EVTQRMNEVL (259 aa). ATP contacts are provided by residues 243-251 and Lys264; that span reads LGGGAYGKV. Residue Asp359 is the Proton acceptor of the active site. One can recognise an SH2 domain in the interval 597–707; that stretch reads WFHFDISRDI…CPITEIKVPY (111 aa).

Belongs to the protein kinase superfamily. Ser/Thr protein kinase family. SH2 domain-containing protein kinase subfamily.

It localises to the membrane. It carries out the reaction L-seryl-[protein] + ATP = O-phospho-L-seryl-[protein] + ADP + H(+). The enzyme catalyses L-threonyl-[protein] + ATP = O-phospho-L-threonyl-[protein] + ADP + H(+). Its function is as follows. Required for proper chemotaxis and phagocytosis; proper spatiotemporal control of F-actin levels in chemotaxing cells. Negative regulator of the PI3K (phosphatidylinositol 3 kinase) pathway. Predominantly phosphorylates serines and threonines and tyrosines at a lower level. The chain is Dual specificity protein kinase shkE (shkE) from Dictyostelium discoideum (Social amoeba).